A 398-amino-acid polypeptide reads, in one-letter code: MNDVDASIEPKRIKEVRAYVVKGGGADYHDQSSEHWILGYIATPISIYPEYRASRASWGLNVLGSVVVEVESSDGEVGFGISTGGYPAAWIIENHLSRFVVGKYVGEVEKTWDQMFKATIYYGRRGIVMNAISAVDLALWDLMGKVRGLPVYDLLGGPVRDELTFYATGPRPDVAKSLGFIGGKLPLIHGPADGIEGLRENVRIFKEAREKVGDDFLLMYDCWMSLDLPYAQRLLSELKPYGLFWIEEPFIPDDYWSFGALANIAPPTLVASGEHESTVHGFRLLLELGKVNVIQPDVTWVGGVTPMIKIAALAEAYGAWVIPHGSSVYGYHFIITRVNSPFAEYLVVSPDATKIVPQFHPLLRDEPIPQNGKVRLSRKPGFGVELNRDLLVRPFKST.

Substrate is bound by residues histidine 29 and arginine 55. Positions 221, 247, and 274 each coordinate Mg(2+). Histidine 324 serves as the catalytic Proton acceptor. Residue glutamate 344 coordinates substrate.

Belongs to the mandelate racemase/muconate lactonizing enzyme family. RhamD subfamily. It depends on Mg(2+) as a cofactor.

It carries out the reaction L-rhamnonate = 2-dehydro-3-deoxy-L-rhamnonate + H2O. Its function is as follows. Catalyzes the dehydration of L-rhamnonate to 2-keto-3-deoxy-L-rhamnonate (KDR). The chain is Putative L-rhamnonate dehydratase from Caldivirga maquilingensis (strain ATCC 700844 / DSM 13496 / JCM 10307 / IC-167).